The primary structure comprises 387 residues: Carboxynorspermidine/carboxyspermidine decarboxylase (387 aa).

An N6-(pyridoxal phosphate)lysine modification is found at lysine 51. Substrate is bound by residues glutamate 248 and aspartate 284.

It belongs to the Orn/Lys/Arg decarboxylase class-II family. NspC subfamily. Homodimer. It depends on pyridoxal 5'-phosphate as a cofactor.

It is found in the cytoplasm. The enzyme catalyses carboxynorspermidine + H(+) = norspermidine + CO2. The catalysed reaction is carboxyspermidine + H(+) = spermidine + CO2. Catalyzes the decarboxylation of carboxynorspermidine and carboxyspermidine. Essential for biofilm formation. The sequence is that of Carboxynorspermidine/carboxyspermidine decarboxylase from Vibrio cholerae serotype O1 (strain ATCC 39315 / El Tor Inaba N16961).